Here is a 274-residue protein sequence, read N- to C-terminus: Thymidylate synthase (274 aa).

Position 21 (Arg21) interacts with dUMP. Residue His51 coordinates (6R)-5,10-methylene-5,6,7,8-tetrahydrofolate. A dUMP-binding site is contributed by 123-124 (RR). The active-site Nucleophile is Cys156. Residues 176–179 (RSAD), Asn187, and 217–219 (HIY) each bind dUMP. Asp179 serves as a coordination point for (6R)-5,10-methylene-5,6,7,8-tetrahydrofolate. Ala273 serves as a coordination point for (6R)-5,10-methylene-5,6,7,8-tetrahydrofolate.

Belongs to the thymidylate synthase family. Bacterial-type ThyA subfamily. Homodimer.

Its subcellular location is the cytoplasm. The catalysed reaction is dUMP + (6R)-5,10-methylene-5,6,7,8-tetrahydrofolate = 7,8-dihydrofolate + dTMP. The protein operates within pyrimidine metabolism; dTTP biosynthesis. In terms of biological role, catalyzes the reductive methylation of 2'-deoxyuridine-5'-monophosphate (dUMP) to 2'-deoxythymidine-5'-monophosphate (dTMP) while utilizing 5,10-methylenetetrahydrofolate (mTHF) as the methyl donor and reductant in the reaction, yielding dihydrofolate (DHF) as a by-product. This enzymatic reaction provides an intracellular de novo source of dTMP, an essential precursor for DNA biosynthesis. The protein is Thymidylate synthase of Flavobacterium psychrophilum (strain ATCC 49511 / DSM 21280 / CIP 103535 / JIP02/86).